Consider the following 382-residue polypeptide: Methylthioribose-1-phosphate isomerase (382 aa).

The active-site Proton donor is the Asp257.

It belongs to the eIF-2B alpha/beta/delta subunits family. MtnA subfamily.

The protein localises to the cytoplasm. The protein resides in the nucleus. The catalysed reaction is 5-(methylsulfanyl)-alpha-D-ribose 1-phosphate = 5-(methylsulfanyl)-D-ribulose 1-phosphate. The protein operates within amino-acid biosynthesis; L-methionine biosynthesis via salvage pathway; L-methionine from S-methyl-5-thio-alpha-D-ribose 1-phosphate: step 1/6. Its function is as follows. Catalyzes the interconversion of methylthioribose-1-phosphate (MTR-1-P) into methylthioribulose-1-phosphate (MTRu-1-P). This Paracoccidioides brasiliensis (strain Pb18) protein is Methylthioribose-1-phosphate isomerase.